The chain runs to 176 residues: Salivary antigen 1 (176 aa).

An N-terminal signal peptide occupies residues 1–18 (MNYCFLVFLVYLVFAVNG).

The protein resides in the secreted. The polypeptide is Salivary antigen 1 (Ctenocephalides felis (Cat flea)).